Reading from the N-terminus, the 576-residue chain is Adenine deaminase 2 (576 aa).

It belongs to the metallo-dependent hydrolases superfamily. Adenine deaminase family. Mn(2+) serves as cofactor.

The enzyme catalyses adenine + H2O + H(+) = hypoxanthine + NH4(+). This chain is Adenine deaminase 2, found in Desulfotalea psychrophila (strain LSv54 / DSM 12343).